We begin with the raw amino-acid sequence, 569 residues long: Endo-1,4-beta-xylanase 5 (569 aa).

Positions Met-1–Ser-25 are cleaved as a signal peptide. N-linked (GlcNAc...) asparagine glycosylation is found at Asn-197, Asn-261, and Asn-307. A GH10 domain is found at Glu-209–Lys-500. The active-site Proton donor is the Glu-332. Asn-346 carries N-linked (GlcNAc...) asparagine glycosylation. Glu-439 (nucleophile) is an active-site residue. N-linked (GlcNAc...) asparagine glycans are attached at residues Asn-490, Asn-536, and Asn-544.

It belongs to the glycosyl hydrolase 10 (cellulase F) family.

The enzyme catalyses Endohydrolysis of (1-&gt;4)-beta-D-xylosidic linkages in xylans.. The protein operates within glycan degradation; xylan degradation. Binds to and hydrolyzes insoluble and soluble xylan substrates. The chain is Endo-1,4-beta-xylanase 5 from Arabidopsis thaliana (Mouse-ear cress).